Here is a 338-residue protein sequence, read N- to C-terminus: S-adenosylmethionine:tRNA ribosyltransferase-isomerase (338 aa).

The protein belongs to the QueA family. In terms of assembly, monomer.

It localises to the cytoplasm. It catalyses the reaction 7-aminomethyl-7-carbaguanosine(34) in tRNA + S-adenosyl-L-methionine = epoxyqueuosine(34) in tRNA + adenine + L-methionine + 2 H(+). The protein operates within tRNA modification; tRNA-queuosine biosynthesis. Its function is as follows. Transfers and isomerizes the ribose moiety from AdoMet to the 7-aminomethyl group of 7-deazaguanine (preQ1-tRNA) to give epoxyqueuosine (oQ-tRNA). The chain is S-adenosylmethionine:tRNA ribosyltransferase-isomerase from Francisella tularensis subsp. holarctica (strain FTNF002-00 / FTA).